A 1194-amino-acid chain; its full sequence is Phosphatidylinositol-3,5-bisphosphate 3-phosphatase MTMR3 (1194 aa).

S4 is modified (phosphoserine). The region spanning 151–572 (EHVTSRFKNE…RNLMLWSAVY (422 aa)) is the Myotubularin phosphatase domain. Residues N322, N347, and I348 each contribute to the a 1,2-diacyl-sn-glycero-3-phospho-(1D-myo-inositol-3,5-bisphosphate) site. A 1,2-diacyl-sn-glycero-3-phospho-(1D-myo-inositol-3-phosphate) contacts are provided by N322, N347, and I348. The Phosphocysteine intermediate role is filled by C409. A 1,2-diacyl-sn-glycero-3-phospho-(1D-myo-inositol-3,5-bisphosphate)-binding residues include S410, D411, G412, W413, D414, R415, K451, and R455. A 1,2-diacyl-sn-glycero-3-phospho-(1D-myo-inositol-3-phosphate) contacts are provided by S410, D411, G412, W413, D414, and R415. Residue R455 coordinates a 1,2-diacyl-sn-glycero-3-phospho-(1D-myo-inositol-3-phosphate). The tract at residues 583-609 (DDSCAPYPAPGTSPDEPPLSRLPKTRS) is disordered. A compositionally biased stretch (pro residues) spans 589–599 (YPAPGTSPDEP). S609, S629, S643, and S647 each carry phosphoserine. The segment covering 693-724 (TKEESGVEEPTHREHTEVPEVKEEAPLAKESR) has biased composition (basic and acidic residues). 3 disordered regions span residues 693–731 (TKEE…QGSG), 852–871 (ESGP…RFSG), and 876–897 (PIAP…HRTS). The residue at position 725 (T725) is a Phosphothreonine. S904 bears the Phosphoserine mark. Disordered regions lie at residues 932 to 971 (NKAS…HQLS) and 988 to 1017 (KWLN…DGMP). Residues 991 to 1006 (NSHSGRPSTTNSPEQP) are compositionally biased toward polar residues. Positions 1025 to 1058 (QRLRQIESGHQQEVETLKKQVQELKSRLESQYLT) form a coiled coil. S1060 carries the post-translational modification Phosphoserine. An FYVE-type zinc finger spans residues 1115 to 1175 (DHLAAHCYAC…VCKSCYSSLH (61 aa)). Zn(2+)-binding residues include C1121, C1124, C1137, C1140, C1145, C1148, C1167, and C1170.

It belongs to the protein-tyrosine phosphatase family. Non-receptor class myotubularin subfamily. In terms of assembly, forms heterodimers with MTMR4 that recruit both CEP55 and PLK1; occurs during early mitosis, regulates the phosphorylation of CEP55 by PLK1 and its recruitment to the midbody where it mediates cell abscission.

It localises to the cytoplasm. The protein localises to the cytosol. The protein resides in the membrane. It carries out the reaction a 1,2-diacyl-sn-glycero-3-phospho-(1D-myo-inositol-3,5-bisphosphate) + H2O = a 1,2-diacyl-sn-glycero-3-phospho-(1D-myo-inositol-5-phosphate) + phosphate. The catalysed reaction is a 1,2-diacyl-sn-glycero-3-phospho-(1D-myo-inositol-3-phosphate) + H2O = a 1,2-diacyl-sn-glycero-3-phospho-(1D-myo-inositol) + phosphate. It catalyses the reaction 1,2-dihexadecanoyl-sn-glycero-3-phospho-(1D-myo-inositol-3-phosphate) + H2O = 1,2-dihexadecanoyl-sn-glycero-3-phospho-(1D-myo-inositol) + phosphate. The enzyme catalyses 1,2-dioctanoyl-sn-glycero-3-phospho-(1-D-myo-inositol-3-phosphate) + H2O = 1,2-dioctanoyl-sn-glycero-3-phospho-(1D-myo-inositol) + phosphate. It carries out the reaction 1,2-dihexadecanoyl-sn-glycero-3-phospho-(1D-myo-inositol-3,5-phosphate) + H2O = 1,2-dihexadecanoyl-sn-glycero-3-phospho-(1D-myo-inositol-5-phosphate) + phosphate. Functionally, lipid phosphatase that specifically dephosphorylates the D-3 position of phosphatidylinositol 3-phosphate and phosphatidylinositol 3,5-bisphosphate, generating phosphatidylinositol and phosphatidylinositol 5-phosphate. Decreases the levels of phosphatidylinositol 3-phosphate, a phospholipid found in cell membranes where it acts as key regulator of both cell signaling and intracellular membrane traffic. Could also have a molecular sequestering/adapter activity and regulate biological processes independently of its phosphatase activity. It includes the regulation of midbody abscission during mitotic cytokinesis. The sequence is that of Phosphatidylinositol-3,5-bisphosphate 3-phosphatase MTMR3 from Rattus norvegicus (Rat).